Here is a 461-residue protein sequence, read N- to C-terminus: Glyceraldehyde-3-phosphate dehydrogenase-like protein (461 aa).

At T421 the chain carries Phosphothreonine.

This sequence belongs to the glyceraldehyde-3-phosphate dehydrogenase family.

This chain is Glyceraldehyde-3-phosphate dehydrogenase-like protein (gap2), found in Pseudomonas aeruginosa (strain UCBPP-PA14).